The primary structure comprises 397 residues: Elongation factor Tu (397 aa).

Positions 10 to 206 (KPHVNIGTIG…AVDTAIPEPE (197 aa)) constitute a tr-type G domain. The G1 stretch occupies residues 19–26 (GHIDHGKT). Residue 19–26 (GHIDHGKT) coordinates GTP. A Mg(2+)-binding site is contributed by T26. The G2 stretch occupies residues 62 to 66 (GITIS). The tract at residues 83–86 (DCPG) is G3. Residues 83-87 (DCPGH) and 138-141 (NKAD) each bind GTP. The segment at 138 to 141 (NKAD) is G4. A G5 region spans residues 176 to 178 (SAL).

Belongs to the TRAFAC class translation factor GTPase superfamily. Classic translation factor GTPase family. EF-Tu/EF-1A subfamily. Monomer.

It is found in the cytoplasm. It catalyses the reaction GTP + H2O = GDP + phosphate + H(+). In terms of biological role, GTP hydrolase that promotes the GTP-dependent binding of aminoacyl-tRNA to the A-site of ribosomes during protein biosynthesis. The chain is Elongation factor Tu from Kineococcus radiotolerans (strain ATCC BAA-149 / DSM 14245 / SRS30216).